The chain runs to 194 residues: MYIMKQSGWLELICGSMFSGKSEELIRRVKRATYAKQEVKVFKPAIDNRYSEEAVVSHNGTSMTSHVISSSAEIWDHISESTDVIAVDEVQFFGESIIGDLSSLADKGYRVIAAGLDMDFRGEPFGVVPNLMAVAESVTKLQAVCSVCGSPASRTQRLIDGKPASYDDPVILVGASESYEARCRHHHEVPKKTD.

ATP-binding positions include 15–22 and 88–91; these read GSMFSGKS and DEVQ. The active-site Proton acceptor is Glu89. Cys145, Cys148, Cys183, and His186 together coordinate Zn(2+).

It belongs to the thymidine kinase family. As to quaternary structure, homotetramer.

It is found in the cytoplasm. The enzyme catalyses thymidine + ATP = dTMP + ADP + H(+). The chain is Thymidine kinase from Bacillus velezensis (strain DSM 23117 / BGSC 10A6 / LMG 26770 / FZB42) (Bacillus amyloliquefaciens subsp. plantarum).